Consider the following 113-residue polypeptide: Inner membrane protein YiaB (113 aa).

Over 1 to 9 (MKTSKTVAK) the chain is Cytoplasmic. The helical transmembrane segment at 10 to 20 (LLFVVGALVYL) threads the bilayer. Residues 21-33 (VGLWISCPLLSGK) lie on the Periplasmic side of the membrane. A helical transmembrane segment spans residues 34 to 51 (GYFLGVLMTATFGNYAYL). Residues 52 to 61 (RAEKLGQLDD) are Cytoplasmic-facing. A helical transmembrane segment spans residues 62-82 (FFTHICQLVALITIGLLFIGV). At 83–84 (LN) the chain is on the periplasmic side. The helical transmembrane segment at 85-105 (APINTYEMVIYPIAFFVCLFG) threads the bilayer. Residues 106–113 (QMRLFRSA) are Cytoplasmic-facing.

The protein resides in the cell inner membrane. In Escherichia coli (strain K12), this protein is Inner membrane protein YiaB (yiaB).